A 233-amino-acid chain; its full sequence is Orotidine 5'-phosphate decarboxylase (233 aa).

Substrate-binding positions include aspartate 13, lysine 35, 62–71, threonine 122, arginine 182, glutamine 191, glycine 211, and arginine 212; that span reads DLKFHDIPNT. Residue lysine 64 is the Proton donor of the active site.

Belongs to the OMP decarboxylase family. Type 1 subfamily. In terms of assembly, homodimer.

The enzyme catalyses orotidine 5'-phosphate + H(+) = UMP + CO2. It functions in the pathway pyrimidine metabolism; UMP biosynthesis via de novo pathway; UMP from orotate: step 2/2. Catalyzes the decarboxylation of orotidine 5'-monophosphate (OMP) to uridine 5'-monophosphate (UMP). This is Orotidine 5'-phosphate decarboxylase from Pseudomonas entomophila (strain L48).